Here is a 413-residue protein sequence, read N- to C-terminus: GDP-mannose-dependent alpha-mannosyltransferase (413 aa).

It belongs to the glycosyltransferase group 1 family.

Its pathway is phospholipid metabolism; phosphatidylinositol metabolism. Its function is as follows. Catalyzes the addition of a mannose residue from GDP-D-mannose to GlcAGroAc2 to generate 1,2-di-O-C16/C18:1-(alpha-D-mannopyranosyl)-(1-4)-(alpha-D-glucopyranosyluronic acid)-(1-3)-glycerol(ManGlcAGroAc2). This is GDP-mannose-dependent alpha-mannosyltransferase (mgtA) from Corynebacterium glutamicum (strain ATCC 13032 / DSM 20300 / JCM 1318 / BCRC 11384 / CCUG 27702 / LMG 3730 / NBRC 12168 / NCIMB 10025 / NRRL B-2784 / 534).